The chain runs to 692 residues: Elongation factor G (692 aa).

Residues 8-283 (EDYRNFGIMA…AVVDYLPSPL (276 aa)) enclose the tr-type G domain. Residues 17–24 (AHIDAGKT), 81–85 (DTPGH), and 135–138 (NKMD) each bind GTP.

This sequence belongs to the TRAFAC class translation factor GTPase superfamily. Classic translation factor GTPase family. EF-G/EF-2 subfamily.

The protein resides in the cytoplasm. Catalyzes the GTP-dependent ribosomal translocation step during translation elongation. During this step, the ribosome changes from the pre-translocational (PRE) to the post-translocational (POST) state as the newly formed A-site-bound peptidyl-tRNA and P-site-bound deacylated tRNA move to the P and E sites, respectively. Catalyzes the coordinated movement of the two tRNA molecules, the mRNA and conformational changes in the ribosome. This is Elongation factor G from Caulobacter sp. (strain K31).